We begin with the raw amino-acid sequence, 168 residues long: Protein C2-DOMAIN ABA-RELATED 3 (168 aa).

The C2 domain maps to 1-106 (MSLMDNLLGI…IEALRMELSG (106 aa)). Positions 24, 25, 30, 76, 77, 78, and 84 each coordinate Ca(2+).

Belongs to the plant CAR protein family. Binds to PYR/PYL/RCAR abscisic acid intracellular receptors in an ABA-independent manner, both at the plasma membrane and in the nucleus. Ca(2+) is required as a cofactor.

The protein resides in the cell membrane. It localises to the nucleus. In terms of biological role, stimulates the GTPase/ATPase activities of Obg-like ATPases. Mediates the transient calcium-dependent interaction of PYR/PYL/RCAR abscisic acid (ABA) receptors with the plasma membrane and thus regulates ABA sensitivity. The polypeptide is Protein C2-DOMAIN ABA-RELATED 3 (Arabidopsis thaliana (Mouse-ear cress)).